We begin with the raw amino-acid sequence, 284 residues long: uncharacterized protein (284 aa).

This is an uncharacterized protein from Methanothermobacter thermautotrophicus (Methanobacterium thermoformicicum).